The primary structure comprises 157 residues: Putative gamma-glutamylcyclotransferase CG2811 (157 aa).

14–17 contributes to the substrate binding site; the sequence is YGTL. The Proton acceptor role is filled by Glu-89.

Belongs to the gamma-glutamylcyclotransferase family.

In terms of biological role, putative gamma-glutamylcyclotransferase. This chain is Putative gamma-glutamylcyclotransferase CG2811, found in Drosophila melanogaster (Fruit fly).